The chain runs to 380 residues: MNTHNQSSNQNGGGSGGGGGGGGSSTFSPIVLTSTYRLDVQEKYTFSYEIGSGTYGMVYKADDKKRPNNKVAVKKFRSTKEGEGLSLTAYREIGLLKELSNENIVKLLDVCLNPKDKLLYLIFDYAEFDLFGIIKYHRENGSHFSDATIKSLIWQVLNGIHYLHSNWVIHRDLKPSNILVMGEGKECGTVKIGDFGLARIFQSPLKPLNENGVVVTIWYRSPELLLGSKHYTRAVDIWAIGCIFAELITTKPLFPGKEKDPKIPSLFQDDQVEKIIRVLGKPTLDMWPDIKHLPEWKRLSSMEAFPNSLAKCVGIDENSQAYDLLSKMILYDPSKRITASEALDHPYFKELPLPLPNAFSKPIPYPPRLPINKKKREFDD.

The segment covering 1 to 10 has biased composition (low complexity); sequence MNTHNQSSNQ. Residues 1-22 are disordered; sequence MNTHNQSSNQNGGGSGGGGGGG. Residues 11–22 are compositionally biased toward gly residues; the sequence is NGGGSGGGGGGG. The region spanning 44 to 348 is the Protein kinase domain; it reads YTFSYEIGSG…ASEALDHPYF (305 aa). ATP contacts are provided by residues 50-58 and Lys74; that span reads IGSGTYGMV. The active-site Proton acceptor is Asp172.

This sequence belongs to the protein kinase superfamily. CMGC Ser/Thr protein kinase family. CDC2/CDKX subfamily. As to quaternary structure, component of the Mediator complex. Mg(2+) is required as a cofactor.

The protein resides in the nucleus. It catalyses the reaction L-seryl-[protein] + ATP = O-phospho-L-seryl-[protein] + ADP + H(+). It carries out the reaction L-threonyl-[protein] + ATP = O-phospho-L-threonyl-[protein] + ADP + H(+). The catalysed reaction is [DNA-directed RNA polymerase] + ATP = phospho-[DNA-directed RNA polymerase] + ADP + H(+). In terms of biological role, component of the Mediator complex, a coactivator involved in regulated gene transcription of nearly all RNA polymerase II-dependent genes. Mediator functions as a bridge to convey information from gene-specific regulatory proteins to the basal RNA polymerase II transcription machinery. Mediator is recruited to promoters by direct interactions with regulatory proteins and serves as a scaffold for the assembly of a functional pre-initiation complex with RNA polymerase II and the general transcription factors. Phosphorylates the CTD (C-terminal domain) of the large subunit of RNA polymerase II (RNAp II), which may inhibit the formation of a transcription initiation complex. Involved in cell aggregation, but not growth. Required for starvation-induced expression of genes essential for early development of acaA and/or other genes. The sequence is that of Probable cyclin-dependent kinase 8 (cdk8) from Dictyostelium discoideum (Social amoeba).